Reading from the N-terminus, the 131-residue chain is Small ribosomal subunit protein uS8 (131 aa).

The protein belongs to the universal ribosomal protein uS8 family. As to quaternary structure, part of the 30S ribosomal subunit. Contacts proteins S5 and S12.

Functionally, one of the primary rRNA binding proteins, it binds directly to 16S rRNA central domain where it helps coordinate assembly of the platform of the 30S subunit. This chain is Small ribosomal subunit protein uS8, found in Sorangium cellulosum (strain So ce56) (Polyangium cellulosum (strain So ce56)).